Here is a 98-residue protein sequence, read N- to C-terminus: Large ribosomal subunit protein eL14 (98 aa).

This sequence belongs to the eukaryotic ribosomal protein eL14 family.

This Thermofilum pendens (strain DSM 2475 / Hrk 5) protein is Large ribosomal subunit protein eL14.